We begin with the raw amino-acid sequence, 556 residues long: MQFDYIIIGAGSAGNVLATRLTEDPNTTVLLLEAGGPDYRFDFRTQMPAALAFPLQGKRYNWAYETEPEPFMNNRRMECGRGKGLGGSSLINGMCYIRGNALDLDNWAQEPSLENWSYLDCLPYYRKAETRDVGENDYHGGDGPVSVTTSKPGVNPLFEAMIEAGMQAGYPRTDDLNGYQQEGFGPMDRTVTPHGRRASTARGYLDQAKSRPNLTIRTHAMTDHIIFDGKRAVGVEWLEGDSTIPTRAAANKEVLLCAGAIASPQILQRSGVGNAELLAEFDIPLVHELPGVGENLQDHLEMYLQYECKEPVSLYPALQWWNQPRIGAEWLFGGTGVGASNHFEAGGFIRSREEFAWPNIQYHFLPVAINYNGSNAVKEHGFQCHVGSMRSPSRGHVRIKSRDPHQHPGILFNYMSHEQDWQEFRDAIRITREIMHQPALDQYRGREISPGVECQTDEQLDEFVRNHAETAFHPCGTCKMGYDEMAVVDGEGRVHGLEGLRVVDASIMPQIITGNLNATTIMIGEKIADMIRGKEALPRSTAGYFVANGMPVRAKK.

FAD is bound at residue 4 to 33; it reads DYIIIGAGSAGNVLATRLTEDPNTTVLLLE. His-473 acts as the Proton acceptor in catalysis.

It belongs to the GMC oxidoreductase family. FAD is required as a cofactor.

The protein localises to the cell membrane. The enzyme catalyses choline + A = betaine aldehyde + AH2. The catalysed reaction is betaine aldehyde + NAD(+) + H2O = glycine betaine + NADH + 2 H(+). It functions in the pathway amine and polyamine biosynthesis; betaine biosynthesis via choline pathway; betaine aldehyde from choline (cytochrome c reductase route): step 1/1. Its function is as follows. Involved in the biosynthesis of the osmoprotectant glycine betaine. Catalyzes the oxidation of choline to betaine aldehyde and betaine aldehyde to glycine betaine at the same rate. The protein is Oxygen-dependent choline dehydrogenase of Escherichia coli O6:H1 (strain CFT073 / ATCC 700928 / UPEC).